Consider the following 310-residue polypeptide: GMP synthase [glutamine-hydrolyzing] subunit B (310 aa).

The region spanning 2–185 is the GMPS ATP-PPase domain; sequence FKTEPFIEES…LGLPDQIAHR (184 aa). Residue 29 to 35 coordinates ATP; that stretch reads SGGVDSS.

As to quaternary structure, heterodimer composed of a glutamine amidotransferase subunit (A) and a GMP-binding subunit (B).

It carries out the reaction XMP + L-glutamine + ATP + H2O = GMP + L-glutamate + AMP + diphosphate + 2 H(+). The protein operates within purine metabolism; GMP biosynthesis; GMP from XMP (L-Gln route): step 1/1. Functionally, catalyzes the synthesis of GMP from XMP. This Methanococcus maripaludis (strain C7 / ATCC BAA-1331) protein is GMP synthase [glutamine-hydrolyzing] subunit B.